Consider the following 75-residue polypeptide: ATP synthase subunit c (75 aa).

The next 2 membrane-spanning stretches (helical) occupy residues 8–28 and 54–74; these read FLGIGLSVVGMLGAAIGVSNI and AALTEAMGLFSFVLALLLIFV.

It belongs to the ATPase C chain family. F-type ATPases have 2 components, F(1) - the catalytic core - and F(0) - the membrane proton channel. F(1) has five subunits: alpha(3), beta(3), gamma(1), delta(1), epsilon(1). F(0) has three main subunits: a(1), b(2) and c(10-14). The alpha and beta chains form an alternating ring which encloses part of the gamma chain. F(1) is attached to F(0) by a central stalk formed by the gamma and epsilon chains, while a peripheral stalk is formed by the delta and b chains.

The protein localises to the cell inner membrane. Its function is as follows. F(1)F(0) ATP synthase produces ATP from ADP in the presence of a proton or sodium gradient. F-type ATPases consist of two structural domains, F(1) containing the extramembraneous catalytic core and F(0) containing the membrane proton channel, linked together by a central stalk and a peripheral stalk. During catalysis, ATP synthesis in the catalytic domain of F(1) is coupled via a rotary mechanism of the central stalk subunits to proton translocation. Functionally, key component of the F(0) channel; it plays a direct role in translocation across the membrane. A homomeric c-ring of between 10-14 subunits forms the central stalk rotor element with the F(1) delta and epsilon subunits. This is ATP synthase subunit c from Neorickettsia sennetsu (strain ATCC VR-367 / Miyayama) (Ehrlichia sennetsu).